Consider the following 170-residue polypeptide: Sec-independent protein translocase protein TatB (170 aa).

Residues 1 to 21 (MIDFGFDKIALIGAVALIVIG) form a helical membrane-spanning segment. The segment at 69–170 (AARNVEQSVS…VARFRPPRPL (102 aa)) is disordered. Positions 73-93 (VEQSVSSEVNRTSSEMNQAWE) are enriched in polar residues. Over residues 128 to 137 (HPRKNWRLKR) the composition is skewed to basic residues.

It belongs to the TatB family. In terms of assembly, the Tat system comprises two distinct complexes: a TatABC complex, containing multiple copies of TatA, TatB and TatC subunits, and a separate TatA complex, containing only TatA subunits. Substrates initially bind to the TatABC complex, which probably triggers association of the separate TatA complex to form the active translocon.

The protein resides in the cell inner membrane. Its function is as follows. Part of the twin-arginine translocation (Tat) system that transports large folded proteins containing a characteristic twin-arginine motif in their signal peptide across membranes. Together with TatC, TatB is part of a receptor directly interacting with Tat signal peptides. TatB may form an oligomeric binding site that transiently accommodates folded Tat precursor proteins before their translocation. The polypeptide is Sec-independent protein translocase protein TatB (Methylibium petroleiphilum (strain ATCC BAA-1232 / LMG 22953 / PM1)).